The sequence spans 327 residues: Serpentine receptor class alpha-33 (327 aa).

6 helical membrane-spanning segments follow: residues 20 to 40, 56 to 76, 133 to 153, 186 to 206, 227 to 247, and 270 to 290; these read FSVYFIDTSCIISMAVTVLAI, LLITDLVFINIHNLSYIFLQN, FSHANYGFLLAILSLIASTVF, IIPYLAICLTSIVCSLLLIIY, AVVSSISVAILGIIQLVLFCF, and IIGWFYTSPLNAIISPTAVFL.

The protein belongs to the nematode receptor-like protein sra family.

It localises to the membrane. This is Serpentine receptor class alpha-33 (sra-33) from Caenorhabditis elegans.